Consider the following 453-residue polypeptide: Cobyrinate a,c-diamide synthase (453 aa).

Residues 250–440 (RIAVPFDEAF…IHTHTACLPD (191 aa)) form the GATase cobBQ-type domain. The active-site Nucleophile is C332.

The protein belongs to the CobB/CbiA family. Mg(2+) is required as a cofactor.

It catalyses the reaction cob(II)yrinate + 2 L-glutamine + 2 ATP + 2 H2O = cob(II)yrinate a,c diamide + 2 L-glutamate + 2 ADP + 2 phosphate + 2 H(+). It carries out the reaction Ni-sirohydrochlorin + 2 L-glutamine + 2 ATP + 2 H2O = Ni-sirohydrochlorin a,c-diamide + 2 L-glutamate + 2 ADP + 2 phosphate + 2 H(+). Its pathway is cofactor biosynthesis; adenosylcobalamin biosynthesis; cob(II)yrinate a,c-diamide from sirohydrochlorin (anaerobic route): step 10/10. Functionally, catalyzes the ATP-dependent amidation of the two carboxylate groups at positions a and c of cobyrinate, using either L-glutamine or ammonia as the nitrogen source. Involved in the biosynthesis of the unique nickel-containing tetrapyrrole coenzyme F430, the prosthetic group of methyl-coenzyme M reductase (MCR), which plays a key role in methanogenesis and anaerobic methane oxidation. Catalyzes the ATP-dependent amidation of the two carboxylate groups at positions a and c of Ni-sirohydrochlorin, using L-glutamine or ammonia as the nitrogen source. The polypeptide is Cobyrinate a,c-diamide synthase (Methanosphaera stadtmanae (strain ATCC 43021 / DSM 3091 / JCM 11832 / MCB-3)).